Here is a 682-residue protein sequence, read N- to C-terminus: Protein SPT2 homolog (682 aa).

The segment at 1-569 (MDFREILLIA…PLLSGYRSAQ (569 aa)) is important for interaction with DNA. K37 participates in a covalent cross-link: Glycyl lysine isopeptide (Lys-Gly) (interchain with G-Cter in SUMO2). The stretch at 46–82 (AFLRRKEEELRQKALEEKKRKEELVKKRIELKHDKKA) forms a coiled coil. Residues 80–170 (KKARAMAKRT…SAPSPMNFTD (91 aa)) are disordered. Residues 101–111 (VEEKTKKKQLV) are compositionally biased toward basic and acidic residues. The segment covering 121 to 131 (QEYDVEEEDFI) has biased composition (acidic residues). Residues 156–165 (KAPLKSAPSP) show a composition bias toward low complexity. Residue K186 forms a Glycyl lysine isopeptide (Lys-Gly) (interchain with G-Cter in SUMO2) linkage. Over residues 187 to 208 (VVKKAEDRPLTAEELREREFLE) the composition is skewed to basic and acidic residues. Disordered stretches follow at residues 187–533 (VVKK…TKPR) and 549–595 (RSSN…DEYD). Polar residues-rich tracts occupy residues 267 to 280 (STASEKQAALSSPK), 317 to 334 (STCSPSVPKTPASGTQKS), 371 to 393 (PGSNSGSAPGQPNPGTARPTLSS), 400 to 409 (QNGSSSSGPE), and 419 to 432 (ASNSHLSGRTLNGT). Position 277 is a phosphoserine (S277). Low complexity-rich tracts occupy residues 435–460 (PGRPASSSSGPGRPISGSAGSGRPVG) and 490–504 (SGPGRSISGSIPAGR). Positions 570–682 (GPQRLPFPTG…RRKAKKLKRH (113 aa)) are important for interaction with histones. K581 carries the post-translational modification N6-acetyllysine. Acidic residues predominate over residues 586-595 (YEEDDDDEYD). S596 bears the Phosphoserine mark. Composition is skewed to basic and acidic residues over residues 641-652 (SWKEQQKEEAKS) and 663-672 (EMRREEEELK). The disordered stretch occupies residues 641–682 (SWKEQQKEEAKSLRLGMQEDLEEMRREEEELKRRKAKKLKRH). A coiled-coil region spans residues 642–682 (WKEQQKEEAKSLRLGMQEDLEEMRREEEELKRRKAKKLKRH). A compositionally biased stretch (basic residues) spans 673–682 (RRKAKKLKRH).

It belongs to the SPT2 family. As to quaternary structure, interacts with histones. Interacts with a heterotetrameric complex formed by histone H3 and H4, especially when the histone tetramer is not bound to DNA. Interacts with histone H3.3.

The protein localises to the nucleus. It localises to the nucleolus. In terms of biological role, histone chaperone that stabilizes pre-existing histone tetramers and regulates replication-independent histone exchange on chromatin. Required for normal chromatin refolding in the coding region of transcribed genes, and for the suppression of spurious transcription. Binds DNA and histones and promotes nucleosome assembly (in vitro). Facilitates formation of tetrameric histone complexes containing histone H3 and H4. Modulates RNA polymerase 1-mediated transcription. Binds DNA, with a preference for branched DNA species, such as Y-form DNA and Holliday junction DNA. In Mus musculus (Mouse), this protein is Protein SPT2 homolog (Spty2d1).